The primary structure comprises 119 residues: Large ribosomal subunit protein uL18 (119 aa).

This sequence belongs to the universal ribosomal protein uL18 family. In terms of assembly, part of the 50S ribosomal subunit; part of the 5S rRNA/L5/L18/L25 subcomplex. Contacts the 5S and 23S rRNAs.

In terms of biological role, this is one of the proteins that bind and probably mediate the attachment of the 5S RNA into the large ribosomal subunit, where it forms part of the central protuberance. In Roseobacter denitrificans (strain ATCC 33942 / OCh 114) (Erythrobacter sp. (strain OCh 114)), this protein is Large ribosomal subunit protein uL18.